The chain runs to 844 residues: NADPH-Fe(3+) oxidoreductase subunit alpha (844 aa).

One can recognise a 2Fe-2S ferredoxin-type domain in the interval 1–78 (MVSLTIDGKD…GIKVTTQSEK (78 aa)). Residues cysteine 34, cysteine 45, cysteine 48, and cysteine 62 each contribute to the [2Fe-2S] cluster site. One can recognise a 4Fe-4S His(Cys)3-ligated-type domain in the interval 78-117 (KLSRIRQKIMELMLVNHPLDCPVCDAGGECDLQNACYGLG). Residues histidine 94, cysteine 98, cysteine 101, cysteine 107, cysteine 146, cysteine 149, cysteine 152, cysteine 186, cysteine 189, cysteine 192, cysteine 196, cysteine 222, cysteine 225, cysteine 229, and cysteine 256 each coordinate [4Fe-4S] cluster. 2 4Fe-4S ferredoxin-type domains span residues 137-168 (PLIESDPNRCILCEKCVKVDHEIVGCNAIRVV) and 177-206 (DTVDGNPLNCEFCGNCVAACPTGTLISKPF). The 4Fe-4S Mo/W bis-MGD-type domain occupies 215–270 (FTTTPSVCPFCATGCQIEYHSRNGRVERVTSDDSTYNSGNLCINGRFGYSYINSPD).

Heterotetramer with 2 beta subunits. It depends on [4Fe-4S] cluster as a cofactor.

It localises to the cell inner membrane. With respect to regulation, not regulated by FAD or FMN. The SfrAB enzymatic complex is probably involved in acetate metabolism and does not participate directly in the reduction of Fe(3+) chelates. May serve as a major route for NADP regeneration. The chain is NADPH-Fe(3+) oxidoreductase subunit alpha (sfrA) from Geobacter sulfurreducens (strain DL-1 / KN400).